Here is a 271-residue protein sequence, read N- to C-terminus: Putative pyruvate, phosphate dikinase regulatory protein (271 aa).

147-154 (GLSRTSKT) provides a ligand contact to ADP.

Belongs to the pyruvate, phosphate/water dikinase regulatory protein family. PDRP subfamily.

It catalyses the reaction N(tele)-phospho-L-histidyl/L-threonyl-[pyruvate, phosphate dikinase] + ADP = N(tele)-phospho-L-histidyl/O-phospho-L-threonyl-[pyruvate, phosphate dikinase] + AMP + H(+). The enzyme catalyses N(tele)-phospho-L-histidyl/O-phospho-L-threonyl-[pyruvate, phosphate dikinase] + phosphate + H(+) = N(tele)-phospho-L-histidyl/L-threonyl-[pyruvate, phosphate dikinase] + diphosphate. In terms of biological role, bifunctional serine/threonine kinase and phosphorylase involved in the regulation of the pyruvate, phosphate dikinase (PPDK) by catalyzing its phosphorylation/dephosphorylation. The polypeptide is Putative pyruvate, phosphate dikinase regulatory protein (Clostridium tetani (strain Massachusetts / E88)).